The sequence spans 100 residues: U12-ctenitoxin-Pn1a (100 aa).

Positions 1–28 (MKYRIFKMKYTLLFLSVIALVHIFAVEA) are cleaved as a signal peptide. Residues 29–41 (KDEPESDALVPQE) constitute a propeptide that is removed on maturation. 5 cysteine pairs are disulfide-bonded: C44/C58, C51/C64, C57/C82, C66/C80, and C90/C97.

Belongs to the neurotoxin 09 (Tx3-6) family. In terms of tissue distribution, expressed by the venom gland.

It localises to the secreted. In terms of biological role, probable neurotoxin. The sequence is that of U12-ctenitoxin-Pn1a from Phoneutria nigriventer (Brazilian armed spider).